A 334-amino-acid polypeptide reads, in one-letter code: MKKNQFLKESDVTAESVFFMKRRQVLKALGISAAALSLPHAAHADLLSWFKGNDRPPAPAGKPLEFSKPAAWQNNLPLTPADKVSGYNNFYEFGLDKADPAANAGSLKTDPWTLKISGEVAKPLTLDHDDLTRRFPLEERIYRMRCVEAWSMVVPWIGFPLHKLLALAEPTSNAKYVAFETIYAPEQMPGQQDRFIGGGLKYPYVEGLRLDEAMHPLTLMTVGVYGKALPPQNGAPVRLIVPWKYGFKGIKSIVSIKLTRERPPTTWNLAAPDEYGFYANVNPHVDHPRWSQATERFIGSGGILDVQRQPTLLFNGYADQVASLYRGLDLRENF.

A signal peptide (tat-type signal) is located at residues M1 to A44. Residues N88, Y91–E92, C146, T181, N233, R238, and G249–K251 contribute to the Mo-molybdopterin site.

This sequence belongs to the MsrP family. As to quaternary structure, heterodimer of a catalytic subunit (MsrP) and a heme-binding subunit (MsrQ). Mo-molybdopterin serves as cofactor. In terms of processing, predicted to be exported by the Tat system. The position of the signal peptide cleavage has not been experimentally proven.

Its subcellular location is the periplasm. The catalysed reaction is L-methionyl-[protein] + a quinone + H2O = L-methionyl-(S)-S-oxide-[protein] + a quinol. It catalyses the reaction L-methionyl-[protein] + a quinone + H2O = L-methionyl-(R)-S-oxide-[protein] + a quinol. In terms of biological role, part of the MsrPQ system that repairs oxidized periplasmic proteins containing methionine sulfoxide residues (Met-O), using respiratory chain electrons. Thus protects these proteins from oxidative-stress damage caused by reactive species of oxygen and chlorine generated by the host defense mechanisms. MsrPQ is essential for the maintenance of envelope integrity under bleach stress, rescuing a wide series of structurally unrelated periplasmic proteins from methionine oxidation, including the primary periplasmic chaperone SurA and the lipoprotein Pal. The catalytic subunit MsrP is non-stereospecific, being able to reduce both (R-) and (S-) diastereoisomers of methionine sulfoxide. This chain is Protein-methionine-sulfoxide reductase catalytic subunit MsrP, found in Escherichia coli O81 (strain ED1a).